A 222-amino-acid polypeptide reads, in one-letter code: Polyadenylate-binding protein 2 (222 aa).

The tract at residues M1–E43 is disordered. Basic and acidic residues predominate over residues V10 to I24. Positions R101 to T178 constitute an RRM domain.

It localises to the nucleus. Functionally, involved in the 3'-end formation of mRNA precursors (pre-mRNA) by the addition of a poly(A) tail of 200-250 nt to the upstream cleavage product. The sequence is that of Polyadenylate-binding protein 2 (pabpn1) from Dictyostelium discoideum (Social amoeba).